A 272-amino-acid chain; its full sequence is Acetylglutamate kinase (272 aa).

Substrate-binding positions include 41 to 42, arginine 63, and asparagine 166; that span reads GG.

This sequence belongs to the acetylglutamate kinase family. ArgB subfamily.

The protein localises to the cytoplasm. It catalyses the reaction N-acetyl-L-glutamate + ATP = N-acetyl-L-glutamyl 5-phosphate + ADP. Its pathway is amino-acid biosynthesis; L-arginine biosynthesis; N(2)-acetyl-L-ornithine from L-glutamate: step 2/4. Functionally, catalyzes the ATP-dependent phosphorylation of N-acetyl-L-glutamate. The sequence is that of Acetylglutamate kinase from Anaeromyxobacter dehalogenans (strain 2CP-1 / ATCC BAA-258).